Reading from the N-terminus, the 564-residue chain is Putative zinc metalloproteinase in scaA 5'region (564 aa).

Positions 1–564 (MTRLQDDFYD…KEADFSAEEF (564 aa)) constitute a Peptidase M13 domain. A Zn(2+)-binding site is contributed by histidine 478. The active site involves glutamate 479. Histidine 482 and glutamate 538 together coordinate Zn(2+). Catalysis depends on aspartate 542, which acts as the Proton donor.

The protein belongs to the peptidase M13 family. The cofactor is Zn(2+).

The protein is Putative zinc metalloproteinase in scaA 5'region of Streptococcus gordonii (strain Challis / ATCC 35105 / BCRC 15272 / CH1 / DL1 / V288).